A 207-amino-acid polypeptide reads, in one-letter code: Probable nicotinate-nucleotide adenylyltransferase (207 aa).

The protein belongs to the NadD family.

It carries out the reaction nicotinate beta-D-ribonucleotide + ATP + H(+) = deamido-NAD(+) + diphosphate. Its pathway is cofactor biosynthesis; NAD(+) biosynthesis; deamido-NAD(+) from nicotinate D-ribonucleotide: step 1/1. Catalyzes the reversible adenylation of nicotinate mononucleotide (NaMN) to nicotinic acid adenine dinucleotide (NaAD). This chain is Probable nicotinate-nucleotide adenylyltransferase, found in Synechococcus sp. (strain JA-3-3Ab) (Cyanobacteria bacterium Yellowstone A-Prime).